The sequence spans 551 residues: Cleavage and polyadenylation specificity factor subunit 6 (551 aa).

In terms of domain architecture, RRM spans 81-161 (IALYIGNLTW…QNPVVTPCNK (81 aa)). Thr157 carries the post-translational modification Phosphothreonine. Over residues 169–180 (MQSRKTTQSGQM) the composition is skewed to polar residues. Disordered stretches follow at residues 169–410 (MQSR…TPLS) and 477–551 (LHGI…YRHR). Pro residues-rich tracts occupy residues 237-265 (TRPP…PLAG), 285-366 (GQPP…PPPA), and 377-388 (GPPPTDPYGRPP). 2 stretches are compositionally biased toward basic and acidic residues: residues 389-404 (PYDR…EMDA) and 489-503 (SRRE…SRSR). Phosphoserine occurs at positions 494, 500, 511, 513, and 525. A compositionally biased stretch (basic residues) spans 504 to 514 (EKSRRHKSRSR). Over residues 515 to 551 (DRHDDYYRERSRERERHRDRDRDRDRERDREREYRHR) the composition is skewed to basic and acidic residues.

This sequence belongs to the RRM CPSF6/7 family. As to quaternary structure, component of the cleavage factor Im (CFIm) complex.

Its subcellular location is the nucleus. It is found in the nucleoplasm. It localises to the nucleus speckle. The protein resides in the cytoplasm. Its function is as follows. Component of the cleavage factor Im (CFIm) complex that functions as an activator of the pre-mRNA 3'-end cleavage and polyadenylation processing required for the maturation of pre-mRNA into functional mRNAs. CFIm contributes to the recruitment of multiprotein complexes on specific sequences on the pre-mRNA 3'-end, so called cleavage and polyadenylation signals (pA signals). Most pre-mRNAs contain multiple pA signals, resulting in alternative cleavage and polyadenylation (APA) producing mRNAs with variable 3'-end formation. The CFIm complex acts as a key regulator of cleavage and polyadenylation site choice during APA through its binding to 5'-UGUA-3' elements localized in the 3'-untranslated region (UTR) for a huge number of pre-mRNAs. Plays a role in mRNA export. This chain is Cleavage and polyadenylation specificity factor subunit 6, found in Gallus gallus (Chicken).